Reading from the N-terminus, the 379-residue chain is Fructose-1,6-bisphosphate aldolase/phosphatase (379 aa).

Residue Asp-13 is the Proton acceptor; for FBP phosphatase activity of the active site. The Mg(2+) site is built by Asp-13, His-20, Asp-51, and Asp-52. His-20 is a binding site for beta-D-fructose 1,6-bisphosphate. His-20 is a binding site for dihydroxyacetone phosphate. Residue Tyr-89 participates in beta-D-fructose 1,6-bisphosphate binding. Gln-93 contacts Mg(2+). Gly-102–Asn-103 is a beta-D-fructose 1,6-bisphosphate binding site. Asp-130 is a Mg(2+) binding site. Lys-131 contributes to the beta-D-fructose 1,6-bisphosphate binding site. Lys-131 is a binding site for dihydroxyacetone phosphate. Tyr-227 (proton donor/acceptor; for FBP aldolase activity) is an active-site residue. 3 residues coordinate Mg(2+): Lys-230, Asp-231, and Asp-232. Lys-230 serves as the catalytic Schiff-base intermediate with DHAP; for FBP aldolase activity. Beta-D-fructose 1,6-bisphosphate contacts are provided by residues Gln-240–Ser-241, Arg-264, Asp-285, and Tyr-346. Dihydroxyacetone phosphate is bound by residues Arg-264 and Asp-285.

Belongs to the FBP aldolase/phosphatase family. As to quaternary structure, homooctamer; dimer of tetramers. Mg(2+) is required as a cofactor.

It carries out the reaction beta-D-fructose 1,6-bisphosphate + H2O = beta-D-fructose 6-phosphate + phosphate. The enzyme catalyses beta-D-fructose 1,6-bisphosphate = D-glyceraldehyde 3-phosphate + dihydroxyacetone phosphate. It functions in the pathway carbohydrate biosynthesis; gluconeogenesis. Catalyzes two subsequent steps in gluconeogenesis: the aldol condensation of dihydroxyacetone phosphate (DHAP) and glyceraldehyde-3-phosphate (GA3P) to fructose-1,6-bisphosphate (FBP), and the dephosphorylation of FBP to fructose-6-phosphate (F6P). The protein is Fructose-1,6-bisphosphate aldolase/phosphatase of Moorella thermoacetica (strain ATCC 39073 / JCM 9320).